Consider the following 259-residue polypeptide: MFDIGVNLTSTQFAKDRDKVVKRAREAGISGMLITGTNALESQQALSLARQHANYCWSTAGVHPHHASEWSAETAATLRRLAESPLVVAIGECGLDFNRNFSQPEQQVYAFNAQLALAAELSLPVFLHCREAHERFITILKPWLPSLKAAVLHCFTGARAELESCLAEGLSIGITGWICDERRGQELRELVPLIPADRLLLETDAPWLLPRDMRPRPPSRRNEPCFLPHIVQQVALLRGDDVDELAAQTALNARALFGL.

A divalent metal cation is bound by residues Glu92, His128, and His153.

Belongs to the metallo-dependent hydrolases superfamily. TatD-type hydrolase family. TatD subfamily. As to quaternary structure, monomer. Requires Mg(2+) as cofactor.

It is found in the cytoplasm. In terms of biological role, 3'-5' exonuclease that prefers single-stranded DNA and RNA. May play a role in the H(2)O(2)-induced DNA damage repair. This chain is 3'-5' ssDNA/RNA exonuclease TatD, found in Erwinia amylovora (strain ATCC 49946 / CCPPB 0273 / Ea273 / 27-3).